The sequence spans 162 residues: UPF0114 protein Sden_0436 (162 aa).

3 helical membrane passes run 15–35, 53–73, and 136–156; these read IMAPIYLGLSLILFALGIKFF, LVLITLSLIDITLVGGLLIMV, and IMWYLLIHITFVLSAFAMGYL.

This sequence belongs to the UPF0114 family.

Its subcellular location is the cell membrane. This Shewanella denitrificans (strain OS217 / ATCC BAA-1090 / DSM 15013) protein is UPF0114 protein Sden_0436.